Consider the following 181-residue polypeptide: Inner membrane-spanning protein YciB (181 aa).

Helical transmembrane passes span 10–30, 50–70, 72–92, 118–138, and 148–168; these read LIIFFAVYKFFDIYIASGALI, MHLITFAMVTVFGTLTLVFHD, AFIKWKVTIIYALFALALGVS, VTWYWVSFFAICGLVNIYVAF, and FKVFGLTALTLINTVITVFYL.

The protein belongs to the YciB family.

The protein resides in the cell inner membrane. In terms of biological role, plays a role in cell envelope biogenesis, maintenance of cell envelope integrity and membrane homeostasis. The polypeptide is Inner membrane-spanning protein YciB (Shewanella sp. (strain ANA-3)).